A 177-amino-acid polypeptide reads, in one-letter code: Putative fimbrin-like protein FimI (177 aa).

Residues 1-19 form the signal peptide; that stretch reads MIRKGAALVGLVLMSPVIA. A disulfide bond links cysteine 40 and cysteine 81.

It belongs to the fimbrial protein family.

The protein resides in the fimbrium. This chain is Putative fimbrin-like protein FimI (fimI), found in Salmonella typhi.